A 262-amino-acid chain; its full sequence is Probable ketoamine kinase TTHA1179 (262 aa).

Ala79–Leu81 is an ATP binding site. Asp172 serves as the catalytic Proton acceptor.

The protein belongs to the fructosamine kinase family.

It carries out the reaction N(6)-(D-ribulosyl)-L-lysine + ATP = N(6)-(3-O-phospho-D-ribulosyl)-L-lysine + ADP + H(+). It catalyses the reaction N(6)-(D-erythrulosyl)-L-lysine + ATP = N(6)-(3-O-phospho-D-erythrulosyl)-L-lysine + ADP + H(+). The catalysed reaction is N(6)-D-ribulosyl-L-lysyl-[protein] + ATP = N(6)-(3-O-phospho-D-ribulosyl)-L-lysyl-[protein] + ADP + H(+). The enzyme catalyses N(6)-(D-erythrulosyl)-L-lysyl-[protein] + ATP = N(6)-(3-O-phospho-D-erythrulosyl)-L-lysyl-[protein] + ADP + H(+). In terms of biological role, ketoamine kinase that phosphorylates ketoamines, such as erythruloselysine and ribuloselysine, on the third carbon of the sugar moiety to generate ketoamine 3-phosphate. Has higher activity on free lysine (erythruloselysine and ribuloselysine), than on ribuloselysine and erythruloselysine residues on glycated proteins. This chain is Probable ketoamine kinase TTHA1179, found in Thermus thermophilus (strain ATCC 27634 / DSM 579 / HB8).